The following is a 293-amino-acid chain: Small ribosomal subunit biogenesis GTPase RsgA (293 aa).

Residues 63–223 (KNELVRPPIA…VADTPGFSSL (161 aa)) enclose the CP-type G domain. GTP is bound by residues 112-115 (SKMD) and 166-174 (GQSGVGKSS). The Zn(2+) site is built by Cys247, Cys252, His254, and Cys260.

It belongs to the TRAFAC class YlqF/YawG GTPase family. RsgA subfamily. Monomer. Associates with 30S ribosomal subunit, binds 16S rRNA. It depends on Zn(2+) as a cofactor.

It localises to the cytoplasm. Its function is as follows. One of several proteins that assist in the late maturation steps of the functional core of the 30S ribosomal subunit. Helps release RbfA from mature subunits. May play a role in the assembly of ribosomal proteins into the subunit. Circularly permuted GTPase that catalyzes slow GTP hydrolysis, GTPase activity is stimulated by the 30S ribosomal subunit. The protein is Small ribosomal subunit biogenesis GTPase RsgA of Bacillus anthracis.